We begin with the raw amino-acid sequence, 143 residues long: Large ribosomal subunit protein uL13 (143 aa).

The protein belongs to the universal ribosomal protein uL13 family. In terms of assembly, part of the 50S ribosomal subunit.

This protein is one of the early assembly proteins of the 50S ribosomal subunit, although it is not seen to bind rRNA by itself. It is important during the early stages of 50S assembly. The chain is Large ribosomal subunit protein uL13 from Symbiobacterium thermophilum (strain DSM 24528 / JCM 14929 / IAM 14863 / T).